Reading from the N-terminus, the 204-residue chain is FMN-dependent NADH:quinone oxidoreductase (204 aa).

Residues serine 10 and 15–17 contribute to the FMN site; that span reads SLS.

The protein belongs to the azoreductase type 1 family. In terms of assembly, homodimer. The cofactor is FMN.

It carries out the reaction 2 a quinone + NADH + H(+) = 2 a 1,4-benzosemiquinone + NAD(+). The catalysed reaction is N,N-dimethyl-1,4-phenylenediamine + anthranilate + 2 NAD(+) = 2-(4-dimethylaminophenyl)diazenylbenzoate + 2 NADH + 2 H(+). Functionally, quinone reductase that provides resistance to thiol-specific stress caused by electrophilic quinones. Its function is as follows. Also exhibits azoreductase activity. Catalyzes the reductive cleavage of the azo bond in aromatic azo compounds to the corresponding amines. The sequence is that of FMN-dependent NADH:quinone oxidoreductase from Rhizobium johnstonii (strain DSM 114642 / LMG 32736 / 3841) (Rhizobium leguminosarum bv. viciae).